A 295-amino-acid chain; its full sequence is Protoheme IX farnesyltransferase 2 (295 aa).

9 helical membrane-spanning segments follow: residues Ile-9–Ala-29, Phe-36–Phe-56, Leu-83–Val-103, Leu-108–Leu-128, Gly-135–Ser-155, Val-163–Phe-183, Ile-209–Ala-229, Gly-230–Gly-250, and Val-264–Gln-284.

Belongs to the UbiA prenyltransferase family. Protoheme IX farnesyltransferase subfamily.

The protein resides in the cell inner membrane. The catalysed reaction is heme b + (2E,6E)-farnesyl diphosphate + H2O = Fe(II)-heme o + diphosphate. It functions in the pathway porphyrin-containing compound metabolism; heme O biosynthesis; heme O from protoheme: step 1/1. Its function is as follows. Converts heme B (protoheme IX) to heme O by substitution of the vinyl group on carbon 2 of heme B porphyrin ring with a hydroxyethyl farnesyl side group. The protein is Protoheme IX farnesyltransferase 2 of Pseudomonas putida (strain W619).